The chain runs to 391 residues: Elongation factor Tu (391 aa).

Residues 10 to 201 (KPHVNIGTVG…AVDEYIPTPE (192 aa)) form the tr-type G domain. The segment at 19-26 (GHVDHGKT) is G1. A GTP-binding site is contributed by 19–26 (GHVDHGKT). T26 serves as a coordination point for Mg(2+). A G2 region spans residues 55 to 59 (GITIS). Positions 76 to 79 (DCPG) are G3. Residues 76–80 (DCPGH) and 131–134 (NKVD) each bind GTP. Residues 131–134 (NKVD) form a G4 region. Positions 169 to 171 (SAL) are G5.

The protein belongs to the TRAFAC class translation factor GTPase superfamily. Classic translation factor GTPase family. EF-Tu/EF-1A subfamily. In terms of assembly, monomer.

The protein resides in the cytoplasm. The enzyme catalyses GTP + H2O = GDP + phosphate + H(+). In terms of biological role, GTP hydrolase that promotes the GTP-dependent binding of aminoacyl-tRNA to the A-site of ribosomes during protein biosynthesis. This is Elongation factor Tu from Ruegeria sp. (strain TM1040) (Silicibacter sp.).